Reading from the N-terminus, the 119-residue chain is Large ribosomal subunit protein bL19 (119 aa).

Belongs to the bacterial ribosomal protein bL19 family.

In terms of biological role, this protein is located at the 30S-50S ribosomal subunit interface and may play a role in the structure and function of the aminoacyl-tRNA binding site. This Photobacterium profundum (strain SS9) protein is Large ribosomal subunit protein bL19.